The primary structure comprises 210 residues: ATP-dependent Clp protease proteolytic subunit (210 aa).

S107 functions as the Nucleophile in the catalytic mechanism. The active site involves H132.

The protein belongs to the peptidase S14 family. In terms of assembly, fourteen ClpP subunits assemble into 2 heptameric rings which stack back to back to give a disk-like structure with a central cavity, resembling the structure of eukaryotic proteasomes.

It is found in the cytoplasm. The enzyme catalyses Hydrolysis of proteins to small peptides in the presence of ATP and magnesium. alpha-casein is the usual test substrate. In the absence of ATP, only oligopeptides shorter than five residues are hydrolyzed (such as succinyl-Leu-Tyr-|-NHMec, and Leu-Tyr-Leu-|-Tyr-Trp, in which cleavage of the -Tyr-|-Leu- and -Tyr-|-Trp bonds also occurs).. Functionally, cleaves peptides in various proteins in a process that requires ATP hydrolysis. Has a chymotrypsin-like activity. Plays a major role in the degradation of misfolded proteins. The polypeptide is ATP-dependent Clp protease proteolytic subunit (Ruegeria sp. (strain TM1040) (Silicibacter sp.)).